A 229-amino-acid polypeptide reads, in one-letter code: 7-cyano-7-deazaguanine synthase (229 aa).

15–25 (LSGGLDSATVV) is a binding site for ATP. Residues C194, C204, C207, and C210 each contribute to the Zn(2+) site.

This sequence belongs to the QueC family. Requires Zn(2+) as cofactor.

The catalysed reaction is 7-carboxy-7-deazaguanine + NH4(+) + ATP = 7-cyano-7-deazaguanine + ADP + phosphate + H2O + H(+). It participates in purine metabolism; 7-cyano-7-deazaguanine biosynthesis. In terms of biological role, catalyzes the ATP-dependent conversion of 7-carboxy-7-deazaguanine (CDG) to 7-cyano-7-deazaguanine (preQ(0)). This Pseudomonas syringae pv. syringae (strain B728a) protein is 7-cyano-7-deazaguanine synthase.